A 608-amino-acid polypeptide reads, in one-letter code: MKWVTFLLLLFISGSAFSRGVFRREAHKSEIAHRFKDLGEQHFKGLVLIAFSQYLQKCPYEEHIKLVQEVTDFAKTCVADENAENCDKSIHTLFGDKLCAIPKLRDNYGELADCCAKQEPERNECFLQHKDDNPNLPPFQRPEAEAMCTSFQENPTSFLGHYLHEVARRHPYFYAPELLYYAEKYNEVLTQCCTESDKAACLTPKLDAVKEKALVAAVRQRMKCSSMQRFGERAFKAWAVARMSQRFPNAEFAEITKLATDVTKINKECCHGDLLECADDRAELAKYMCENQATISSKLQACCDKPVLQKSQCLAEIEHDNIPADLPSIAADFVEDKEVCKNYAEAKDVFLGTFLYEYSRRHPDYSVSLLLRLAKKYEATLEKCCAEGDPPACYGTVLAEFQPLVEEPKNLVKTNCELYEKLGEYGFQNAVLVRYTQKAPQVSTPTLVEAARNLGRVGTKCCTLPEAQRLPCVEDYLSAILNRLCVLHEKTPVSEKVTKCCSGSLVERRPCFSALTVDETYVPKEFKAETFTFHSDICTLPDKEKQIKKQTALAELVKHKPKATEDQLKTVMGDFAQFVDKCCKAADKDNCFATEGPNLVARSKEALA.

The N-terminal stretch at 1-18 (MKWVTFLLLLFISGSAFS) is a signal peptide. The propeptide occupies 19–24 (RGVFRR). Albumin domains lie at 19 to 211 (RGVF…AVKE), 212 to 403 (KALV…EFQP), and 404 to 601 (LVEE…NLVA). Position 27 (H27) interacts with Cu cation. S29 is subject to Phosphoserine. Ca(2+) is bound by residues E30 and D37. Cysteines 77 and 86 form a disulfide. Phosphoserine is present on S89. Residue H91 participates in Zn(2+) binding. Disulfide bonds link C99/C115, C114/C125, C148/C193, C192/C201, C224/C270, and C269/C277. E268 is a Ca(2+) binding site. Residues H271 and D273 each contribute to the Zn(2+) site. Ca(2+) is bound by residues D273, E276, and D279. Intrachain disulfides connect C289–C303, C302–C313, C340–C385, C384–C393, C416–C462, C461–C472, C485–C501, and C500–C511. Position 297 is a phosphoserine (S297). S443 carries the post-translational modification Phosphoserine. 2 positions are modified to phosphothreonine: T444 and T446. Residue K460 is modified to N6-succinyllysine. Residue S513 is modified to Phosphoserine. 2 disulfide bridges follow: C538–C583 and C582–C591. At K543 the chain carries N6-succinyllysine. Residue K558 is modified to N6-methyllysine. T570 is modified (phosphothreonine). K588 bears the N6-succinyllysine mark.

It belongs to the ALB/AFP/VDB family. Interacts with FCGRT; this interaction regulates ALB homeostasis. Interacts with TASOR. In plasma, occurs in a covalently-linked complex with chromophore-bound alpha-1-microglobulin; this interaction does not prevent fatty acid binding to ALB. In terms of processing, phosphorylated by FAM20C in the extracellular medium. As to expression, plasma.

The protein resides in the secreted. Functionally, binds water, Ca(2+), Na(+), K(+), fatty acids, hormones, bilirubin and drugs. Its main function is the regulation of the colloidal osmotic pressure of blood. Major zinc transporter in plasma, typically binds about 80% of all plasma zinc. Major calcium and magnesium transporter in plasma, binds approximately 45% of circulating calcium and magnesium in plasma. Potentially has more than two calcium-binding sites and might additionally bind calcium in a non-specific manner. The shared binding site between zinc and calcium at residue Asp-273 suggests a crosstalk between zinc and calcium transport in the blood. The rank order of affinity is zinc &gt; calcium &gt; magnesium. Binds to the bacterial siderophore enterobactin and inhibits enterobactin-mediated iron uptake of E.coli from ferric transferrin, and may thereby limit the utilization of iron and growth of enteric bacteria such as E.coli. Does not prevent iron uptake by the bacterial siderophore aerobactin. The sequence is that of Albumin (Alb) from Rattus norvegicus (Rat).